Here is a 436-residue protein sequence, read N- to C-terminus: Enolase (436 aa).

Q167 contributes to the (2R)-2-phosphoglycerate binding site. E209 acts as the Proton donor in catalysis. Residues D246, E291, and D318 each contribute to the Mg(2+) site. The (2R)-2-phosphoglycerate site is built by K343, R372, S373, and K394. Residue K343 is the Proton acceptor of the active site.

Belongs to the enolase family. In terms of assembly, component of the RNA degradosome, a multiprotein complex involved in RNA processing and mRNA degradation. Requires Mg(2+) as cofactor.

The protein localises to the cytoplasm. It is found in the secreted. It localises to the cell surface. The catalysed reaction is (2R)-2-phosphoglycerate = phosphoenolpyruvate + H2O. It functions in the pathway carbohydrate degradation; glycolysis; pyruvate from D-glyceraldehyde 3-phosphate: step 4/5. Functionally, catalyzes the reversible conversion of 2-phosphoglycerate (2-PG) into phosphoenolpyruvate (PEP). It is essential for the degradation of carbohydrates via glycolysis. This is Enolase from Haemophilus influenzae (strain PittEE).